A 322-amino-acid chain; its full sequence is Lipoyl synthase (322 aa).

Cys66, Cys71, Cys77, Cys92, Cys96, Cys99, and Ser306 together coordinate [4Fe-4S] cluster. The 218-residue stretch at 78 to 295 (FSKGTATFMI…EKEAYELGFS (218 aa)) folds into the Radical SAM core domain.

This sequence belongs to the radical SAM superfamily. Lipoyl synthase family. Requires [4Fe-4S] cluster as cofactor.

Its subcellular location is the cytoplasm. The enzyme catalyses [[Fe-S] cluster scaffold protein carrying a second [4Fe-4S](2+) cluster] + N(6)-octanoyl-L-lysyl-[protein] + 2 oxidized [2Fe-2S]-[ferredoxin] + 2 S-adenosyl-L-methionine + 4 H(+) = [[Fe-S] cluster scaffold protein] + N(6)-[(R)-dihydrolipoyl]-L-lysyl-[protein] + 4 Fe(3+) + 2 hydrogen sulfide + 2 5'-deoxyadenosine + 2 L-methionine + 2 reduced [2Fe-2S]-[ferredoxin]. It functions in the pathway protein modification; protein lipoylation via endogenous pathway; protein N(6)-(lipoyl)lysine from octanoyl-[acyl-carrier-protein]: step 2/2. In terms of biological role, catalyzes the radical-mediated insertion of two sulfur atoms into the C-6 and C-8 positions of the octanoyl moiety bound to the lipoyl domains of lipoate-dependent enzymes, thereby converting the octanoylated domains into lipoylated derivatives. This Neisseria meningitidis serogroup C (strain 053442) protein is Lipoyl synthase.